The sequence spans 166 residues: Flagellar assembly factor FliW (166 aa).

The protein belongs to the FliW family. In terms of assembly, interacts with translational regulator CsrA and flagellin(s).

The protein resides in the cytoplasm. Its function is as follows. Acts as an anti-CsrA protein, binds CsrA and prevents it from repressing translation of its target genes, one of which is flagellin. Binds to flagellin and participates in the assembly of the flagellum. This Desulfovibrio desulfuricans (strain ATCC 27774 / DSM 6949 / MB) protein is Flagellar assembly factor FliW.